Reading from the N-terminus, the 305-residue chain is tRNA pseudouridine synthase B (305 aa).

Residue Asp-39 is the Nucleophile of the active site.

The protein belongs to the pseudouridine synthase TruB family. Type 1 subfamily.

It catalyses the reaction uridine(55) in tRNA = pseudouridine(55) in tRNA. Its function is as follows. Responsible for synthesis of pseudouridine from uracil-55 in the psi GC loop of transfer RNAs. This chain is tRNA pseudouridine synthase B, found in Staphylococcus aureus (strain MW2).